The primary structure comprises 114 residues: U17-barytoxin-Tl1a (114 aa).

A signal peptide spans 1-20 (MKTIIVFLSLLVLATKFGDA). Positions 21 to 74 (NEGVNQEQMKEVIQNEFREDFLNEMAAMSLLQQLEAIESTLLEKEADRNSRQKR) are excised as a propeptide. Cystine bridges form between Cys75–Cys88, Cys82–Cys93, and Cys87–Cys108.

The protein belongs to the neurotoxin 14 (magi-1) family. 03 (ICK-30-40) subfamily. Expressed by the venom gland.

It localises to the secreted. Ion channel inhibitor. This chain is U17-barytoxin-Tl1a, found in Trittame loki (Brush-footed trapdoor spider).